Here is a 309-residue protein sequence, read N- to C-terminus: Ribosomal RNA small subunit methyltransferase H (309 aa).

S-adenosyl-L-methionine-binding positions include G41–H43, D61, F85, D102, and Q109.

It belongs to the methyltransferase superfamily. RsmH family.

The protein resides in the cytoplasm. It carries out the reaction cytidine(1402) in 16S rRNA + S-adenosyl-L-methionine = N(4)-methylcytidine(1402) in 16S rRNA + S-adenosyl-L-homocysteine + H(+). In terms of biological role, specifically methylates the N4 position of cytidine in position 1402 (C1402) of 16S rRNA. The chain is Ribosomal RNA small subunit methyltransferase H from Albidiferax ferrireducens (strain ATCC BAA-621 / DSM 15236 / T118) (Rhodoferax ferrireducens).